We begin with the raw amino-acid sequence, 215 residues long: Sodium channel regulatory subunit beta-3 (215 aa).

A signal peptide spans 1-24 (MPAFNRLLPLASLVLIYWVRVCFP). The Ig-like C2-type domain maps to 25–138 (VCVEVPSETE…EAHRPFVKTT (114 aa)). At 25–156 (VCVEVPSETE…EEAGEDFTSV (132 aa)) the chain is on the extracellular side. Intrachain disulfides connect Cys26–Cys48 and Cys45–Cys120. 4 N-linked (GlcNAc...) asparagine glycosylation sites follow: Asn95, Asn109, Asn113, and Asn121. The chain crosses the membrane as a helical span at residues 157–178 (VSEIMMYILLVFLTLWLFIEMI). Topologically, residues 179–215 (YCYRKVSKAEEAAQENASDYLAIPSENKENSVVPVEE) are cytoplasmic.

Belongs to the sodium channel auxiliary subunit SCN3B (TC 8.A.17) family. A voltage-gated sodium (Nav) channel consists of an ion-conducting pore-forming alpha subunit functional on its own that is regulated by one or more beta subunits. Forms homodimers and homotrimers. SCN3B is non-covalently associated with alpha subunits and induces the formation of alpha subunit oligomers, including trimers. Interacts with SCN5A/Nav1.5; regulatory subunit of SCN5A/Nav1.5. Interacts with SCN7A/Nav2.1; probable regulatory subunit of SCN7A/Nav2.1. Interacts with SCN10A; regulatory subunit of SCN10A/Nav1.8. Interacts with NFASC; probably involved in targeting the sodium channels to the nodes of Ranvier. Intramolecular disulfide bonds favor the voltage-gated sodium channel oligomeric complex assembly. In terms of processing, N-glycosylated.

It localises to the cell membrane. Its function is as follows. Regulatory subunit of multiple voltage-gated sodium (Nav) channels directly mediating the depolarization of excitable membranes. Navs, also called VGSCs (voltage-gated sodium channels) or VDSCs (voltage-dependent sodium channels), operate by switching between closed and open conformations depending on the voltage difference across the membrane. In the open conformation they allow Na(+) ions to selectively pass through the pore, along their electrochemical gradient. The influx of Na+ ions provokes membrane depolarization, initiating the propagation of electrical signals throughout cells and tissues. The accessory beta subunits participate in localization and functional modulation of the Nav channels. Modulates the activity of SCN2A/Nav1.2, causing a hyperpolarizing shift in the voltage-dependence of inactivation of the channel and increasing the fraction of channels operating in the fast gating mode. Modulates the activity of SCN5A/Nav1.5. Could also regulate the atypical sodium channel SCN7A/Nav2.1. Modulates the activity of SCN10A/Nav1.8, regulating its oligomerization and accelerating the recovery from inactivation. This chain is Sodium channel regulatory subunit beta-3, found in Mus musculus (Mouse).